The primary structure comprises 628 residues: Rac GTPase-activating protein 1 (628 aa).

Residue methionine 1 is modified to N-acetylmethionine. The stretch at 33–110 forms a coiled coil; sequence QVVKDFEDFR…IQLIRDILMC (78 aa). The interval 107–286 is interaction with SLC26A8; the sequence is ILMCDTSGSI…GTPQNTGGMR (180 aa). Serine 150 carries the post-translational modification Phosphoserine; by PLK1. Residue serine 155 is modified to Phosphoserine. The residue at position 158 (serine 158) is a Phosphoserine; by PLK1. Threonine 162 is modified (phosphothreonine). A phosphoserine; by PLK1 mark is found at serine 165 and serine 171. Residues 179 to 201 form a disordered region; sequence KKREKRRSNSRQFIDGPPGPVKK. A phosphoserine mark is found at serine 204, serine 207, and serine 215. A disordered region spans residues 242–284; it reads SWTRSRGKSGPLQPVNSDSALNSRPLEPRTDTDNLGTPQNTGG. Lysine 249 participates in a covalent cross-link: Glycyl lysine isopeptide (Lys-Gly) (interchain with G-Cter in SUMO2). The residue at position 258 (serine 258) is a Phosphoserine. A compositionally biased stretch (polar residues) spans 274 to 283; sequence DNLGTPQNTG. A Phorbol-ester/DAG-type zinc finger spans residues 287-336; sequence LHDFVSKTVIKPESCVPCGKRIKFGKLSLKCRDCRLVSHPECRDRCPLPC. Threonine 343 carries the post-translational modification Phosphothreonine. Positions 350–540 constitute a Rho-GAP domain; the sequence is GMLADFVSQA…RLLSLPLEYW (191 aa). Serine 388 carries the phosphoserine; by AURKB modification. A Glycyl lysine isopeptide (Lys-Gly) (interchain with G-Cter in SUMO2) cross-link involves residue lysine 405. The residue at position 411 (serine 411) is a Phosphoserine; by AURKB. Residues threonine 564, threonine 577, threonine 585, and threonine 602 each carry the phosphothreonine modification.

As to quaternary structure, heterotetramer of two molecules each of RACGAP1 and KIF23. Found in the centralspindlin complex. Associates with alpha-, beta- and gamma-tubulin and microtubules. Interacts via its Rho-GAP domain with RND2. Associates with AURKB during M phase. Interacts via its Rho-GAP domain and basic region with PRC1. The interaction with PRC1 inhibits its GAP activity towards CDC42 in vitro, which may be required for maintaining normal spindle morphology. Interacts with SLC26A8 via its N-terminus. Interacts with ECT2; the interaction is direct, occurs at anaphase and during cytokinesis in a microtubule-dependent manner, is enhanced by phosphorylation by PLK1 and phosphorylation at Ser-165 plays a major role in mediating binding. Interacts with RAB11FIP3; the interaction occurs at late telophase. Interacts with KIF23; the interaction is direct. Post-translationally, phosphorylated at multiple sites in the midbody during cytokinesis. Phosphorylation by AURKB on Ser-388 at the midbody is, at least in part, responsible for exerting its latent GAP activity towards RhoA. Phosphorylation on multiple serine residues by PLK1 enhances its association with ECT2 and is critical for cleavage furrow formation. Phosphorylation on Ser-165 plays a major role in mediating interaction with ECT2. Phosphorylation on Ser-158 does not appear to contribute to binding to ECT2. In terms of tissue distribution, highly expressed in testis, thymus and spleen and weakly expressed in brain, heart, skeletal muscle and kidney. In testis, expression is restricted to germ cells with the highest levels of expression found in spermatocytes. Not detected in adult liver. Also expressed in fetal liver and in several hematopoietic cell lines.

It is found in the nucleus. The protein resides in the cytoplasm. It localises to the cytoskeleton. Its subcellular location is the spindle. The protein localises to the cytoplasmic vesicle. It is found in the secretory vesicle. The protein resides in the acrosome. It localises to the cleavage furrow. Its subcellular location is the midbody. The protein localises to the midbody ring. It is found in the cell membrane. Functionally, component of the centralspindlin complex that serves as a microtubule-dependent and Rho-mediated signaling required for the myosin contractile ring formation during the cell cycle cytokinesis. Required for proper attachment of the midbody to the cell membrane during cytokinesis. Sequentially binds to ECT2 and RAB11FIP3 which regulates cleavage furrow ingression and abscission during cytokinesis. Plays key roles in controlling cell growth and differentiation of hematopoietic cells through mechanisms other than regulating Rac GTPase activity. Has a critical role in erythropoiesis. Also involved in the regulation of growth-related processes in adipocytes and myoblasts. May be involved in regulating spermatogenesis and in the RACGAP1 pathway in neuronal proliferation. Shows strong GAP (GTPase activation) activity towards CDC42 and RAC1 and less towards RHOA. Essential for the early stages of embryogenesis. May play a role in regulating cortical activity through RHOA during cytokinesis. May participate in the regulation of sulfate transport in male germ cells. In Mus musculus (Mouse), this protein is Rac GTPase-activating protein 1.